A 277-amino-acid polypeptide reads, in one-letter code: MDTYAVIGNPITHSKSPFIHTQFAQQTGRSMCYTTLLAPLDGFERTVTTFRENGGIGLNITVPFKFEAYALATRLTDRARAAHAVNTFRFEQENEILGDNTDGVGLVRDITINLDFALPGKHVLLMGAGGAASGVILPLLQQKPGLLAIANRTPDKAIALQQQFVNHGNITGGHYQDFIGQQFDLIINATSASLHNALPPIPADLFHGTALVYDMLYSSKLTPFLEFASTQGVTNLVDGTGMLVEQAAESFLLWHGIRPETQNVIRQLRDELHLHAS.

Shikimate is bound by residues 14–16 and T61; that span reads SKS. The Proton acceptor role is filled by K65. D77 serves as a coordination point for NADP(+). Residues N86 and D102 each coordinate shikimate. NADP(+)-binding positions include 127 to 131, 151 to 156, and M215; these read GAGGA and NRTPDK. Y217 provides a ligand contact to shikimate. G239 serves as a coordination point for NADP(+).

The protein belongs to the shikimate dehydrogenase family. As to quaternary structure, homodimer.

It catalyses the reaction shikimate + NADP(+) = 3-dehydroshikimate + NADPH + H(+). It participates in metabolic intermediate biosynthesis; chorismate biosynthesis; chorismate from D-erythrose 4-phosphate and phosphoenolpyruvate: step 4/7. Its function is as follows. Involved in the biosynthesis of the chorismate, which leads to the biosynthesis of aromatic amino acids. Catalyzes the reversible NADPH linked reduction of 3-dehydroshikimate (DHSA) to yield shikimate (SA). This Nitrosomonas eutropha (strain DSM 101675 / C91 / Nm57) protein is Shikimate dehydrogenase (NADP(+)).